Reading from the N-terminus, the 434-residue chain is Histidinol dehydrogenase (434 aa).

Y130, Q188, and N211 together coordinate NAD(+). S237, Q259, and H262 together coordinate substrate. Zn(2+) is bound by residues Q259 and H262. Catalysis depends on proton acceptor residues E326 and H327. The substrate site is built by H327, D360, E414, and H419. D360 lines the Zn(2+) pocket. Residue H419 participates in Zn(2+) binding.

This sequence belongs to the histidinol dehydrogenase family. In terms of assembly, homodimer. Requires Zn(2+) as cofactor.

It catalyses the reaction L-histidinol + 2 NAD(+) + H2O = L-histidine + 2 NADH + 3 H(+). The protein operates within amino-acid biosynthesis; L-histidine biosynthesis; L-histidine from 5-phospho-alpha-D-ribose 1-diphosphate: step 9/9. In terms of biological role, catalyzes the sequential NAD-dependent oxidations of L-histidinol to L-histidinaldehyde and then to L-histidine. This Salmonella paratyphi A (strain ATCC 9150 / SARB42) protein is Histidinol dehydrogenase.